The chain runs to 62 residues: Phycobilisome degradation protein NblA homolog 1 (62 aa).

This sequence to Synechococcus PCC 7942 NblA and some, to chloroplast ycf18.

The protein is Phycobilisome degradation protein NblA homolog 1 of Synechocystis sp. (strain ATCC 27184 / PCC 6803 / Kazusa).